Here is a 186-residue protein sequence, read N- to C-terminus: Enhancer of split m7 protein (186 aa).

In terms of domain architecture, bHLH spans 13-68; it reads YRKVMKPLLERKRRARINKCLDELKDLMAECVAQTGDAKFEKADILEVTVQHLRKL. One can recognise an Orange domain in the interval 83-116; sequence FRAGYIRAANEVSRALASLPRVDVAFGTTLMTHL. The WRPW motif motif lies at 183–186; the sequence is WRPW.

Transcription repression requires formation of a complex with a corepressor protein (Groucho). Forms homodimers.

Its subcellular location is the nucleus. Functionally, participates in the control of cell fate choice by uncommitted neuroectodermal cells in the embryo. Transcriptional repressor. Binds DNA on N-box motifs: 5'-CACNAG-3'. The chain is Enhancer of split m7 protein from Drosophila melanogaster (Fruit fly).